Reading from the N-terminus, the 452-residue chain is Pup--protein ligase (452 aa).

Glu9 contributes to the Mg(2+) binding site. Arg53 serves as a coordination point for ATP. Position 55 (Tyr55) interacts with Mg(2+). The active-site Proton acceptor is the Asp57. Glu63 contacts Mg(2+). ATP contacts are provided by Thr66 and Trp419.

Belongs to the Pup ligase/Pup deamidase family. Pup-conjugating enzyme subfamily.

The catalysed reaction is ATP + [prokaryotic ubiquitin-like protein]-L-glutamate + [protein]-L-lysine = ADP + phosphate + N(6)-([prokaryotic ubiquitin-like protein]-gamma-L-glutamyl)-[protein]-L-lysine.. The protein operates within protein degradation; proteasomal Pup-dependent pathway. Its pathway is protein modification; protein pupylation. Its function is as follows. Catalyzes the covalent attachment of the prokaryotic ubiquitin-like protein modifier Pup to the proteasomal substrate proteins, thereby targeting them for proteasomal degradation. This tagging system is termed pupylation. The ligation reaction involves the side-chain carboxylate of the C-terminal glutamate of Pup and the side-chain amino group of a substrate lysine. The polypeptide is Pup--protein ligase (Acidothermus cellulolyticus (strain ATCC 43068 / DSM 8971 / 11B)).